Reading from the N-terminus, the 181-residue chain is HGPRTase-like protein 2 (181 aa).

It belongs to the purine/pyrimidine phosphoribosyltransferase family. Archaeal HPRT subfamily.

May catalyze a purine salvage reaction, the substrate is unknown. This Natrialba magadii (strain ATCC 43099 / DSM 3394 / CCM 3739 / CIP 104546 / IAM 13178 / JCM 8861 / NBRC 102185 / NCIMB 2190 / MS3) (Natronobacterium magadii) protein is HGPRTase-like protein 2.